Reading from the N-terminus, the 161-residue chain is MASVVEALIPGGKANPGPPLGPALGPLGVNIKDVIEKINEKTKDYNGMQVPVKVIVNDDKSVEIEVGTPPTSALILKELNIEKGSGESGTVVVGNLEIAQVAKIARMKKDDILSYSLKAAIKEVMGTCVPMGVTIENLDPRECQKAVDEGKFDESLTAEAW.

This sequence belongs to the universal ribosomal protein uL11 family. Part of the ribosomal stalk of the 50S ribosomal subunit. Interacts with L10 and the large rRNA to form the base of the stalk. L10 forms an elongated spine to which L12 dimers bind in a sequential fashion forming a multimeric L10(L12)X complex.

Functionally, forms part of the ribosomal stalk which helps the ribosome interact with GTP-bound translation factors. In Methanococcoides burtonii (strain DSM 6242 / NBRC 107633 / OCM 468 / ACE-M), this protein is Large ribosomal subunit protein uL11.